Consider the following 450-residue polypeptide: uncharacterized protein (450 aa).

The protein belongs to the heat shock protein 70 family.

This is an uncharacterized protein from Escherichia coli (strain K12).